The chain runs to 642 residues: 1-deoxy-D-xylulose-5-phosphate synthase (642 aa).

Residues H79 and 120-122 (AHS) contribute to the thiamine diphosphate site. D155 lines the Mg(2+) pocket. Residues 156 to 157 (GS), N184, Y293, and E375 contribute to the thiamine diphosphate site. Residue N184 coordinates Mg(2+).

Belongs to the transketolase family. DXPS subfamily. In terms of assembly, homodimer. The cofactor is Mg(2+). Requires thiamine diphosphate as cofactor.

It carries out the reaction D-glyceraldehyde 3-phosphate + pyruvate + H(+) = 1-deoxy-D-xylulose 5-phosphate + CO2. It functions in the pathway metabolic intermediate biosynthesis; 1-deoxy-D-xylulose 5-phosphate biosynthesis; 1-deoxy-D-xylulose 5-phosphate from D-glyceraldehyde 3-phosphate and pyruvate: step 1/1. Its function is as follows. Catalyzes the acyloin condensation reaction between C atoms 2 and 3 of pyruvate and glyceraldehyde 3-phosphate to yield 1-deoxy-D-xylulose-5-phosphate (DXP). The sequence is that of 1-deoxy-D-xylulose-5-phosphate synthase from Ruegeria pomeroyi (strain ATCC 700808 / DSM 15171 / DSS-3) (Silicibacter pomeroyi).